The following is a 191-amino-acid chain: Putative glutathione-dependent formaldehyde-activating enzyme (191 aa).

A CENP-V/GFA domain is found at 20-166; it reads FSGGTLRCHC…FKSVGLETYD (147 aa). Zn(2+) contacts are provided by Cys-27, Cys-29, Cys-48, Cys-50, Cys-53, Cys-95, and Cys-98.

The protein belongs to the Gfa family. Zn(2+) serves as cofactor.

It carries out the reaction S-(hydroxymethyl)glutathione = glutathione + formaldehyde. The protein operates within one-carbon metabolism; formaldehyde degradation; formate from formaldehyde (glutathione route): step 1/3. Catalyzes the condensation of formaldehyde and glutathione to S-hydroxymethylglutathione. In Colletotrichum graminicola (strain M1.001 / M2 / FGSC 10212) (Maize anthracnose fungus), this protein is Putative glutathione-dependent formaldehyde-activating enzyme.